The chain runs to 390 residues: Phosphoglycerate kinase (390 aa).

Residues 21–23 (DLN), Arg36, 59–62 (HLGR), Arg114, and Arg147 each bind substrate. ATP contacts are provided by residues Lys198, Glu314, and 340-343 (GGDT).

This sequence belongs to the phosphoglycerate kinase family. In terms of assembly, monomer.

It localises to the cytoplasm. The enzyme catalyses (2R)-3-phosphoglycerate + ATP = (2R)-3-phospho-glyceroyl phosphate + ADP. Its pathway is carbohydrate degradation; glycolysis; pyruvate from D-glyceraldehyde 3-phosphate: step 2/5. This is Phosphoglycerate kinase (pgk) from Buchnera aphidicola subsp. Acyrthosiphon pisum (strain APS) (Acyrthosiphon pisum symbiotic bacterium).